A 247-amino-acid polypeptide reads, in one-letter code: Trypsin-2 (247 aa).

The first 15 residues, 1 to 15, serve as a signal peptide directing secretion; that stretch reads MNLLLILTFVAAAVA. A propeptide spans 16–23 (activation peptide); the sequence is APFDDDDK. Positions 24–244 constitute a Peptidase S1 domain; it reads IVGGYICEEN…YVDWIKDTIA (221 aa). 4 disulfides stabilise this stretch: C30-C160, C48-C64, C171-C185, and C196-C220. H63 functions as the Charge relay system in the catalytic mechanism. Positions 75, 77, 80, and 85 each coordinate Ca(2+). D107 serves as the catalytic Charge relay system. Position 154 is a sulfotyrosine (Y154). S200 acts as the Charge relay system in catalysis.

Belongs to the peptidase S1 family. Ca(2+) serves as cofactor. Post-translationally, sulfated on tyrosine. Sulfation at Tyr-154 increases selectivity towards basic versus apolar residues at the P2' position of inhibitors that bind in a substrate-like fashion. Although the increase in selectivity is relatively small, it may facilitate digestion of a broader range of dietary proteins. Expressed in Paneth cells, at the base of small intestinal crypts.

The protein localises to the secreted. The protein resides in the extracellular space. It catalyses the reaction Preferential cleavage: Arg-|-Xaa, Lys-|-Xaa.. Its function is as follows. In the ileum, may be involved in defensin processing, including DEFA5. The polypeptide is Trypsin-2 (PRSS2) (Homo sapiens (Human)).